The sequence spans 219 residues: Small ribosomal subunit protein eS1 (219 aa).

Belongs to the eukaryotic ribosomal protein eS1 family. Component of the small ribosomal subunit. Mature ribosomes consist of a small (40S) and a large (60S) subunit. The 40S subunit contains about 33 different proteins and 1 molecule of RNA (18S). The 60S subunit contains about 49 different proteins and 3 molecules of RNA (25S, 5.8S and 5S).

It localises to the cytoplasm. This Guillardia theta (Cryptophyte) protein is Small ribosomal subunit protein eS1.